Reading from the N-terminus, the 176-residue chain is Mitochondrial inner membrane protein Mpv17 (176 aa).

A run of 4 helical transmembrane segments spans residues 18–38, 53–73, 94–114, and 131–151; these read VQVL…QQLV, TMAS…YRVL, GGFA…LNGL, and LITN…LVPL.

Belongs to the peroxisomal membrane protein PXMP2/4 family.

The protein localises to the mitochondrion inner membrane. Functionally, non-selective channel that modulates the membrane potential under normal conditions and oxidative stress, and is involved in mitochondrial homeostasis. Involved in mitochondrial deoxynucleoside triphosphates (dNTP) pool homeostasis and mitochondrial DNA (mtDNA) maintenance. May be involved in the regulation of reactive oxygen species metabolism and the control of oxidative phosphorylation. The polypeptide is Mitochondrial inner membrane protein Mpv17 (Bos taurus (Bovine)).